Consider the following 73-residue polypeptide: Long neurotoxin 3 (73 aa).

Intrachain disulfides connect C3–C21, C14–C42, C27–C31, C46–C57, and C58–C63.

This sequence belongs to the three-finger toxin family. Long-chain subfamily. Type II alpha-neurotoxin sub-subfamily. In terms of tissue distribution, expressed by the venom gland.

The protein resides in the secreted. Its function is as follows. Binds with high affinity to muscular (alpha-1/CHRNA1) and neuronal (alpha-7/CHRNA7) nicotinic acetylcholine receptor (nAChR) and inhibits acetylcholine from binding to the receptor, thereby impairing neuromuscular and neuronal transmission. This is Long neurotoxin 3 from Ophiophagus hannah (King cobra).